Reading from the N-terminus, the 101-residue chain is Small ribosomal subunit protein uS14 (101 aa).

The tract at residues 1 to 22 is disordered; the sequence is MAKVSSIKKNESRKKKSQSLHN. The segment covering 11–22 has biased composition (basic residues); that stretch reads ESRKKKSQSLHN.

Belongs to the universal ribosomal protein uS14 family. In terms of assembly, part of the 30S ribosomal subunit. Contacts proteins S3 and S10.

Its function is as follows. Binds 16S rRNA, required for the assembly of 30S particles and may also be responsible for determining the conformation of the 16S rRNA at the A site. This Rickettsia conorii (strain ATCC VR-613 / Malish 7) protein is Small ribosomal subunit protein uS14.